The chain runs to 275 residues: Diaminopimelate epimerase (275 aa).

N12, Q45, and N65 together coordinate substrate. The active-site Proton donor is C74. Substrate contacts are provided by residues G75–N76, N158, N191, and E209–R210. Residue C218 is the Proton acceptor of the active site. Residue G219–T220 coordinates substrate.

It belongs to the diaminopimelate epimerase family. As to quaternary structure, homodimer.

The protein resides in the cytoplasm. The enzyme catalyses (2S,6S)-2,6-diaminopimelate = meso-2,6-diaminopimelate. It functions in the pathway amino-acid biosynthesis; L-lysine biosynthesis via DAP pathway; DL-2,6-diaminopimelate from LL-2,6-diaminopimelate: step 1/1. Catalyzes the stereoinversion of LL-2,6-diaminopimelate (L,L-DAP) to meso-diaminopimelate (meso-DAP), a precursor of L-lysine and an essential component of the bacterial peptidoglycan. This chain is Diaminopimelate epimerase, found in Shewanella denitrificans (strain OS217 / ATCC BAA-1090 / DSM 15013).